The primary structure comprises 72 residues: Translation initiation factor IF-1 (72 aa).

The 72-residue stretch at 1–72 (MSKEEAIEVE…SRGRITYRAK (72 aa)) folds into the S1-like domain.

It belongs to the IF-1 family. Component of the 30S ribosomal translation pre-initiation complex which assembles on the 30S ribosome in the order IF-2 and IF-3, IF-1 and N-formylmethionyl-tRNA(fMet); mRNA recruitment can occur at any time during PIC assembly.

Its subcellular location is the cytoplasm. One of the essential components for the initiation of protein synthesis. Stabilizes the binding of IF-2 and IF-3 on the 30S subunit to which N-formylmethionyl-tRNA(fMet) subsequently binds. Helps modulate mRNA selection, yielding the 30S pre-initiation complex (PIC). Upon addition of the 50S ribosomal subunit IF-1, IF-2 and IF-3 are released leaving the mature 70S translation initiation complex. This Geobacter metallireducens (strain ATCC 53774 / DSM 7210 / GS-15) protein is Translation initiation factor IF-1.